Here is a 273-residue protein sequence, read N- to C-terminus: Large ribosomal subunit protein uL2 (273 aa).

A disordered region spans residues 222-273 (GVAMNPVDHPMGGGEGRSSGGRHPCTPWGVPTKGYRTRKSKRSDKLIVHRRK). Residues 264–273 (SDKLIVHRRK) are compositionally biased toward basic and acidic residues.

This sequence belongs to the universal ribosomal protein uL2 family. In terms of assembly, part of the 50S ribosomal subunit. Forms a bridge to the 30S subunit in the 70S ribosome.

Its function is as follows. One of the primary rRNA binding proteins. Required for association of the 30S and 50S subunits to form the 70S ribosome, for tRNA binding and peptide bond formation. It has been suggested to have peptidyltransferase activity; this is somewhat controversial. Makes several contacts with the 16S rRNA in the 70S ribosome. The protein is Large ribosomal subunit protein uL2 of Syntrophobacter fumaroxidans (strain DSM 10017 / MPOB).